Here is a 166-residue protein sequence, read N- to C-terminus: Large ribosomal subunit protein uL11 (166 aa).

The protein belongs to the universal ribosomal protein uL11 family.

In terms of biological role, this protein binds directly to 26S ribosomal RNA. In Prunus armeniaca (Apricot), this protein is Large ribosomal subunit protein uL11 (RPL12).